We begin with the raw amino-acid sequence, 235 residues long: 5'-methylthioadenosine/S-adenosylhomocysteine nucleosidase (235 aa).

The active-site Proton acceptor is the E12. Residues G78, I152, and 173-174 (ME) each bind substrate. D197 serves as the catalytic Proton donor.

The protein belongs to the PNP/UDP phosphorylase family. MtnN subfamily. In terms of assembly, homodimer.

The catalysed reaction is S-adenosyl-L-homocysteine + H2O = S-(5-deoxy-D-ribos-5-yl)-L-homocysteine + adenine. It catalyses the reaction S-methyl-5'-thioadenosine + H2O = 5-(methylsulfanyl)-D-ribose + adenine. It carries out the reaction 5'-deoxyadenosine + H2O = 5-deoxy-D-ribose + adenine. It participates in amino-acid biosynthesis; L-methionine biosynthesis via salvage pathway; S-methyl-5-thio-alpha-D-ribose 1-phosphate from S-methyl-5'-thioadenosine (hydrolase route): step 1/2. Its function is as follows. Catalyzes the irreversible cleavage of the glycosidic bond in both 5'-methylthioadenosine (MTA) and S-adenosylhomocysteine (SAH/AdoHcy) to adenine and the corresponding thioribose, 5'-methylthioribose and S-ribosylhomocysteine, respectively. Also cleaves 5'-deoxyadenosine, a toxic by-product of radical S-adenosylmethionine (SAM) enzymes, into 5-deoxyribose and adenine. Thus, is required for in vivo function of the radical SAM enzymes biotin synthase and lipoic acid synthase, that are inhibited by 5'-deoxyadenosine accumulation. In Buchnera aphidicola subsp. Schizaphis graminum (strain Sg), this protein is 5'-methylthioadenosine/S-adenosylhomocysteine nucleosidase.